The sequence spans 399 residues: MAEGIDRKMDDRMEFTTSADVTVAPTFQDMHLKENLLRGIYAYGYESPSAVQSRAIVQICKGRDTIAQAQSGTGKTATFSISMLQVIDTAVRETQALVLSPTRELATQIQSVVMALGDYMNVQCHACIGGTNVGEDIRKLDYGQHIVSGTPGRVADMIRRRNLRTRHIKMLVLDEADELLNRGFREQIYDVYRYLPPATQVVVVSATLPYDVLDMTTKFMTDPVRILVKRDELTLEGLKQYFIAVEKEDWKFDTLCDLYDTLTITQAVIFCNTRRKVDWLTDKMREANFTVSSMHGEMPQKERDSIMQDFRQGNSRVLISTDVWARGIDVQQVSLVINYDLPVNRENYIHRIGRSGRFGRKGVAINFVTSEDVRILRDIELYYSTQIDEMPMNVADLLT.

Positions 25 to 53 match the Q motif motif; sequence PTFQDMHLKENLLRGIYAYGYESPSAVQS. The Helicase ATP-binding domain occupies 56-226; the sequence is IVQICKGRDT…TKFMTDPVRI (171 aa). 69-76 serves as a coordination point for ATP; sequence AQSGTGKT. A DEAD box motif is present at residues 174 to 177; sequence DEAD. Residues 237–398 form the Helicase C-terminal domain; it reads GLKQYFIAVE…EMPMNVADLL (162 aa).

It belongs to the DEAD box helicase family. DDX48/FAL1 subfamily.

Its subcellular location is the nucleus. It is found in the nucleolus. It carries out the reaction ATP + H2O = ADP + phosphate + H(+). ATP-dependent RNA helicase involved in 40S ribosomal subunit biogenesis. Required for the processing and cleavage of 35S pre-rRNA at sites A0, A1, and A2, leading to mature 18S rRNA. This Botryotinia fuckeliana (strain B05.10) (Noble rot fungus) protein is ATP-dependent RNA helicase fal1 (fal1).